Here is a 395-residue protein sequence, read N- to C-terminus: S-adenosylmethionine synthase (395 aa).

Histidine 18 provides a ligand contact to ATP. Residue aspartate 20 coordinates Mg(2+). Glutamate 46 contributes to the K(+) binding site. Residues glutamate 59 and glutamine 103 each contribute to the L-methionine site. Residues 103-113 (QSADIAVGVDS) form a flexible loop region. ATP is bound by residues 170–172 (DAK), 235–236 (KF), aspartate 244, 250–251 (RK), alanine 267, and lysine 271. Aspartate 244 is an L-methionine binding site. Lysine 275 contributes to the L-methionine binding site.

The protein belongs to the AdoMet synthase family. As to quaternary structure, homotetramer; dimer of dimers. Mg(2+) serves as cofactor. The cofactor is K(+).

It is found in the cytoplasm. It catalyses the reaction L-methionine + ATP + H2O = S-adenosyl-L-methionine + phosphate + diphosphate. The protein operates within amino-acid biosynthesis; S-adenosyl-L-methionine biosynthesis; S-adenosyl-L-methionine from L-methionine: step 1/1. Its function is as follows. Catalyzes the formation of S-adenosylmethionine (AdoMet) from methionine and ATP. The overall synthetic reaction is composed of two sequential steps, AdoMet formation and the subsequent tripolyphosphate hydrolysis which occurs prior to release of AdoMet from the enzyme. This is S-adenosylmethionine synthase from Granulibacter bethesdensis (strain ATCC BAA-1260 / CGDNIH1).